The sequence spans 568 residues: 2-succinyl-5-enolpyruvyl-6-hydroxy-3-cyclohexene-1-carboxylate synthase (568 aa).

It belongs to the TPP enzyme family. MenD subfamily. As to quaternary structure, homodimer. The cofactor is Mg(2+). Mn(2+) is required as a cofactor. Requires thiamine diphosphate as cofactor.

It carries out the reaction isochorismate + 2-oxoglutarate + H(+) = 5-enolpyruvoyl-6-hydroxy-2-succinyl-cyclohex-3-ene-1-carboxylate + CO2. The protein operates within quinol/quinone metabolism; 1,4-dihydroxy-2-naphthoate biosynthesis; 1,4-dihydroxy-2-naphthoate from chorismate: step 2/7. Its pathway is quinol/quinone metabolism; menaquinone biosynthesis. In terms of biological role, catalyzes the thiamine diphosphate-dependent decarboxylation of 2-oxoglutarate and the subsequent addition of the resulting succinic semialdehyde-thiamine pyrophosphate anion to isochorismate to yield 2-succinyl-5-enolpyruvyl-6-hydroxy-3-cyclohexene-1-carboxylate (SEPHCHC). The sequence is that of 2-succinyl-5-enolpyruvyl-6-hydroxy-3-cyclohexene-1-carboxylate synthase from Mannheimia succiniciproducens (strain KCTC 0769BP / MBEL55E).